Reading from the N-terminus, the 148-residue chain is Puroindoline-B (148 aa).

An N-terminal signal peptide occupies residues 1 to 19; sequence MKTLFLLALLALVASTTFA. A propeptide spanning residues 20–29 is cleaved from the precursor; that stretch reads QYSEVGGWYN.

Five disulfide bonds are present. As to expression, endosperm and aleurone layer of developing kernels. In the aleurone layer, mainly localized to starch granules and the surface of the plasma membrane, forming a uniform layer, also abundant in the intercellular space. In the endosperm, mainly localized to starch granules and the plasma membrane, but less abundant in the intercellular space. Not found in roots or coleoptiles.

Its subcellular location is the membrane. It is found in the secreted. The protein localises to the extracellular space. Functionally, acts as a membranotoxin, probably through its antibacterial and antifungal activities, contributing to the defense mechanism of the plant against predators. Forms monovalent cation-selective ion channels in membranes. Has antibacterial activity against the Gram-positive bacteria S.aureus and C.michiganensis, and the Gram-negative bacteria E.coli, P.syringae pv phaseoli, A.tumefaciens and E.carotovora subsp carotovora. Acts synergistically with PINA against bacteria. Contributes to grain texture and hardness. The chain is Puroindoline-B (PINB) from Triticum aestivum (Wheat).